A 124-amino-acid chain; its full sequence is Fluoride-specific ion channel FluC 1 (124 aa).

The next 4 membrane-spanning stretches (helical) occupy residues 7-27 (IQSK…LGAI), 32-52 (LNNY…IVGL), 58-78 (IQFF…GWIL), and 93-113 (AGLI…TFWI). Na(+) contacts are provided by glycine 68 and threonine 71.

The protein belongs to the fluoride channel Fluc/FEX (TC 1.A.43) family.

Its subcellular location is the cell inner membrane. It catalyses the reaction fluoride(in) = fluoride(out). With respect to regulation, na(+) is not transported, but it plays an essential structural role and its presence is essential for fluoride channel function. In terms of biological role, fluoride-specific ion channel. Important for reducing fluoride concentration in the cell, thus reducing its toxicity. The polypeptide is Fluoride-specific ion channel FluC 1 (Prochlorococcus marinus (strain SARG / CCMP1375 / SS120)).